The primary structure comprises 215 residues: 3,4-dihydroxy-2-butanone 4-phosphate synthase (215 aa).

Residues 38–39 (RE), aspartate 43, 151–155 (RRGHT), and glutamate 175 each bind D-ribulose 5-phosphate. A Mg(2+)-binding site is contributed by glutamate 39. Residue histidine 154 participates in Mg(2+) binding.

It belongs to the DHBP synthase family. As to quaternary structure, homodimer. Mg(2+) serves as cofactor. The cofactor is Mn(2+).

It catalyses the reaction D-ribulose 5-phosphate = (2S)-2-hydroxy-3-oxobutyl phosphate + formate + H(+). The protein operates within cofactor biosynthesis; riboflavin biosynthesis; 2-hydroxy-3-oxobutyl phosphate from D-ribulose 5-phosphate: step 1/1. Catalyzes the conversion of D-ribulose 5-phosphate to formate and 3,4-dihydroxy-2-butanone 4-phosphate. The protein is 3,4-dihydroxy-2-butanone 4-phosphate synthase of Haemophilus influenzae (strain 86-028NP).